Consider the following 516-residue polypeptide: MEISYGRALWRNFLGQSPDWYKLALIIFLIVNPLVFAVAPFVAGWLLVVEFIFTLAMALKCYPLLPGGLLAIEALLIGMTSPAHVREEIAGNLEVLLLLMFMVAGIYFMKQLLLFVFTRLLLGIRSKMLLSLAFCLAAAFLSAFLDALTVVAVVISVAVGFYGIYHRVASARPDDSDLLNDSHIEQHYREVLEQFRGFLRSLMMHAGVGTALGGVMTMVGEPQNLIIAKAAGWHFGEFFLRMAPVTLPVMVCGLLTCLLVEKYRLFGYGEPLPPTVRKVLQEFDDRSRAQRSRQERLRLIAQALIGVWLIVALAFHLAEVGLIGLSVIILATTFTGVTDEHAIGKAFTEALPFTALLTVFFSIVAVIIDQQLFTPVIEFVLQASPHAQLSLFYLFNGLLSSISDNVFVGTVYINEAKAALEHGAISLPQFEMLAVAINTGTNLPSVATPNGQAAFLFLLTSALAPLIRLSYGRMVWMALPYTIVLTLVGLLCVEFTLMPVTDWLLAHGWLVTPTLP.

12 helical membrane-spanning segments follow: residues 23-43, 61-80, 97-117, 120-140, 144-164, 202-222, 238-258, 303-323, 348-368, 391-411, 447-467, and 475-495; these read LALI…PFVA, CYPL…IGMT, LLLM…LFVF, LLLG…AAAF, FLDA…FYGI, LMMH…VGEP, FFLR…LTCL, ALIG…VGLI, TEAL…AVII, LFYL…VGTV, ATPN…APLI, and VWMA…CVEF.

This sequence belongs to the NhaB Na(+)/H(+) (TC 2.A.34) antiporter family.

The protein resides in the cell inner membrane. It carries out the reaction 2 Na(+)(in) + 3 H(+)(out) = 2 Na(+)(out) + 3 H(+)(in). Its function is as follows. Na(+)/H(+) antiporter that extrudes sodium in exchange for external protons. This chain is Na(+)/H(+) antiporter NhaB, found in Klebsiella pneumoniae subsp. pneumoniae (strain ATCC 700721 / MGH 78578).